We begin with the raw amino-acid sequence, 217 residues long: Imidazole glycerol phosphate synthase subunit HisH (217 aa).

Residues serine 3 to arginine 217 enclose the Glutamine amidotransferase type-1 domain. Catalysis depends on cysteine 82, which acts as the Nucleophile. Active-site residues include histidine 193 and glutamate 195.

Heterodimer of HisH and HisF.

The protein localises to the cytoplasm. The enzyme catalyses 5-[(5-phospho-1-deoxy-D-ribulos-1-ylimino)methylamino]-1-(5-phospho-beta-D-ribosyl)imidazole-4-carboxamide + L-glutamine = D-erythro-1-(imidazol-4-yl)glycerol 3-phosphate + 5-amino-1-(5-phospho-beta-D-ribosyl)imidazole-4-carboxamide + L-glutamate + H(+). It carries out the reaction L-glutamine + H2O = L-glutamate + NH4(+). It participates in amino-acid biosynthesis; L-histidine biosynthesis; L-histidine from 5-phospho-alpha-D-ribose 1-diphosphate: step 5/9. Its function is as follows. IGPS catalyzes the conversion of PRFAR and glutamine to IGP, AICAR and glutamate. The HisH subunit catalyzes the hydrolysis of glutamine to glutamate and ammonia as part of the synthesis of IGP and AICAR. The resulting ammonia molecule is channeled to the active site of HisF. This is Imidazole glycerol phosphate synthase subunit HisH from Methylococcus capsulatus (strain ATCC 33009 / NCIMB 11132 / Bath).